The primary structure comprises 369 residues: Probable serine/threonine-protein kinase DDB_G0291350 (369 aa).

The Protein kinase domain occupies 22 to 367 (YTVNRILGEG…QVIERINQII (346 aa)). ATP contacts are provided by residues 28–36 (LGEGGFSFV) and Lys-51. Catalysis depends on Asp-159, which acts as the Proton acceptor. The tract at residues 169–225 (NLRRPSNNNNNNNNNNNNNNNNNNNNNNNNNNNNNNNNNNNNNNNNNNNNNNNSEDS) is disordered. The span at 175 to 221 (NNNNNNNNNNNNNNNNNNNNNNNNNNNNNNNNNNNNNNNNNNNNNNN) shows a compositional bias: low complexity.

The protein belongs to the protein kinase superfamily. Ser/Thr protein kinase family.

It catalyses the reaction L-seryl-[protein] + ATP = O-phospho-L-seryl-[protein] + ADP + H(+). It carries out the reaction L-threonyl-[protein] + ATP = O-phospho-L-threonyl-[protein] + ADP + H(+). In Dictyostelium discoideum (Social amoeba), this protein is Probable serine/threonine-protein kinase DDB_G0291350.